A 467-amino-acid chain; its full sequence is Iroquois-class homeodomain protein irx-1-A (467 aa).

The segment at residues 126–188 (DPGRPKNATR…NARRRLKKEN (63 aa)) is a DNA-binding region (homeobox; TALE-type). Disordered stretches follow at residues 197 to 306 (KEDD…PPHS), 318 to 344 (TSPDGALKSSPPPSQGNHTSPPIQHPA), and 410 to 467 (SLSS…LPSA). Composition is skewed to acidic residues over residues 215–225 (EDDEEIDLESI) and 233–244 (NDGEQSNEEEDE). Over residues 245–262 (KLEHLRQGEKESLKKESE) the composition is skewed to basic and acidic residues. Residues 415–431 (KTPERTSPKHSDRENVP) are compositionally biased toward basic and acidic residues. The span at 447-460 (RENTLSQQEGTSRI) shows a compositional bias: polar residues.

The protein belongs to the TALE/IRO homeobox family. As to expression, expressed early in neural differentiation in the neural plate, and expression continues in the neural tube after neural fold closure. Expressed in the presumptive midbrain territory. Also expressed in the prospective neural crest and the preplacodal field, anterior to the neural plate. Strongly expressed in the profundal placode and weakly expressed in the trigeminal placode. Also expressed in the mesoderm in the Spemann organizer from the start of gastrulation, and subsequently in its derivatives; namely in the notochord as well as in the somites of stage 25 embryos, and the somites and notochord of tailbud embryos. Also expressed in specific and overlapping dynamic patterns with irx2 and irx3 during pronephric kidney development. Renal expression begins in the dorsal region of the pronephric anlage at mid neurula stage and continues to at least tailbud stages where expression is confined to the intermediate tubule segment IT1. Renal expression is maintained at tadpole stages.

The protein resides in the nucleus. Functionally, acts partially redundantly with other irx members in neural patterning. Required for formation of the posterior forebrain, midbrain, hindbrain, and to a lesser extent, spinal cord. Acts early in neural plate development to induce expression of some but not all proneural genes, and specify a neural precursor state. Also up-regulates repressors that prevent neuronal differentiation. Patterns the neuroectoderm in both the anterior/posterior and dorsal/ventral axes. Acts primarily as a transcriptional repressor during neural development, and binds to the bmp4 promoter to repress gene expression and thus mediate down-regulation of bmp4 by wnt signaling. Controls multiple processes through bmp4-repression including neural plate development, neural crest specification and Spemann organizer development. Involved in the specification of the preplacodal field at the anterior border of the neural plate. Regulates the genetic cascade of interactions that are necessary for positioning the isthmus organizer and the formation of the midbrain-hindbrain boundary. Required during at least two stages of pronephros kidney development; during neurula stages, maintains transcription of key renal genes to define the size and identity of the pronephric anlage, probably in part through regulation of bmp-signaling. Subsequently required for proper formation of the intermediate tubule segment of the pronephros. Acts principally as a transcriptional activator during pronephros development. This Xenopus laevis (African clawed frog) protein is Iroquois-class homeodomain protein irx-1-A (irx1-a).